A 332-amino-acid chain; its full sequence is Beta-ketoacyl-[acyl-carrier-protein] synthase III (332 aa).

Catalysis depends on residues Cys-116 and His-257. Residues 258 to 262 form an ACP-binding region; sequence QANQR. Asn-287 is an active-site residue.

It belongs to the thiolase-like superfamily. FabH family. In terms of assembly, homodimer.

The protein resides in the cytoplasm. It carries out the reaction malonyl-[ACP] + acetyl-CoA + H(+) = 3-oxobutanoyl-[ACP] + CO2 + CoA. It participates in lipid metabolism; fatty acid biosynthesis. Its function is as follows. Catalyzes the condensation reaction of fatty acid synthesis by the addition to an acyl acceptor of two carbons from malonyl-ACP. Catalyzes the first condensation reaction which initiates fatty acid synthesis and may therefore play a role in governing the total rate of fatty acid production. Possesses both acetoacetyl-ACP synthase and acetyl transacylase activities. Its substrate specificity determines the biosynthesis of branched-chain and/or straight-chain of fatty acids. In Acaryochloris marina (strain MBIC 11017), this protein is Beta-ketoacyl-[acyl-carrier-protein] synthase III.